The primary structure comprises 526 residues: Peptide chain release factor 3 (526 aa).

The tr-type G domain maps to 8-277 (DKRRTFAIIS…GLTQWAPKPQ (270 aa)). GTP is bound by residues 17–24 (SHPDAGKT), 85–89 (DTPGH), and 139–142 (NKLD).

The protein belongs to the TRAFAC class translation factor GTPase superfamily. Classic translation factor GTPase family. PrfC subfamily.

Its subcellular location is the cytoplasm. Increases the formation of ribosomal termination complexes and stimulates activities of RF-1 and RF-2. It binds guanine nucleotides and has strong preference for UGA stop codons. It may interact directly with the ribosome. The stimulation of RF-1 and RF-2 is significantly reduced by GTP and GDP, but not by GMP. This chain is Peptide chain release factor 3, found in Actinobacillus succinogenes (strain ATCC 55618 / DSM 22257 / CCUG 43843 / 130Z).